A 236-amino-acid chain; its full sequence is 7-cyano-7-deazaguanine synthase (236 aa).

Residue 13–23 coordinates ATP; it reads FSGGQDSTVCL. Zn(2+)-binding residues include C200, C215, C218, and C221.

Belongs to the QueC family. The cofactor is Zn(2+).

The enzyme catalyses 7-carboxy-7-deazaguanine + NH4(+) + ATP = 7-cyano-7-deazaguanine + ADP + phosphate + H2O + H(+). The protein operates within purine metabolism; 7-cyano-7-deazaguanine biosynthesis. In terms of biological role, catalyzes the ATP-dependent conversion of 7-carboxy-7-deazaguanine (CDG) to 7-cyano-7-deazaguanine (preQ(0)). In Parvibaculum lavamentivorans (strain DS-1 / DSM 13023 / NCIMB 13966), this protein is 7-cyano-7-deazaguanine synthase.